The following is a 1365-amino-acid chain: Serine/threonine-protein kinase LMTK1 (1365 aa).

Residues 32–52 (LAVVAVSFSGIFTVVILMLAC) traverse the membrane as a helical segment. The Protein kinase domain occupies 126 to 396 (LLYLKEIGHG…PTAEEVHLLL (271 aa)). ATP contacts are provided by residues 132-140 (IGHGWFGKV) and Lys157. Asp254 acts as the Proton acceptor in catalysis. Ser500 carries the post-translational modification Phosphoserine. 5 disordered regions span residues 550 to 623 (PDCA…LPAE), 638 to 698 (DDPL…GYVS), 791 to 1186 (QEAE…PAVP), 1237 to 1293 (ESPT…EWDG), and 1343 to 1365 (ISDS…YTEA). The span at 560–575 (QAVTDQDNNSEESTVA) shows a compositional bias: polar residues. 2 stretches are compositionally biased toward low complexity: residues 638–655 (DDPL…QPSP) and 675–686 (SSNMSANNNSAS). 2 stretches are compositionally biased toward polar residues: residues 848-860 (LESS…QEAP) and 869-879 (EATSGVFTDLS). 2 stretches are compositionally biased toward low complexity: residues 904–918 (PDSL…SASD) and 981–993 (PLLS…LSKK). Over residues 1015–1030 (PEKHSGIQDSQKEQDL) the composition is skewed to basic and acidic residues. Ser1035 bears the Phosphoserine mark. Residues 1037–1053 (GHQSVQAFPRSAVSSEV) are compositionally biased toward polar residues. The span at 1072 to 1083 (PLGAQGPVGVQP) shows a compositional bias: low complexity. Residues 1104 to 1132 (GSGTEPQGPSGQLSGRAQQGQMGNPSTPR) show a composition bias toward polar residues. Residues 1150–1164 (PEEDEDTEDSEESDE) are compositionally biased toward acidic residues. Residue Thr1156 is modified to Phosphothreonine. Phosphoserine is present on residues Ser1159, Ser1162, Ser1175, Ser1178, and Ser1253. Residues 1354 to 1365 (PAAGAGGRYTEA) show a composition bias toward gly residues.

Belongs to the protein kinase superfamily. Tyr protein kinase family. Interacts with CDK5. In terms of processing, autophosphorylated. Phosphorylated by CDK5. Expressed in brain, and, to a lower extent, in kidney, heart, lung and skeletal muscle. In the brain, expressed in the olfactory bulb, cerebellum, striatum, hippocampal formation, thalamus, hypothalamus, and pontine nuclei (at protein level).

The protein resides in the membrane. Its subcellular location is the cytoplasm. It localises to the perinuclear region. The protein localises to the cell projection. It is found in the dendrite. The protein resides in the axon. Its subcellular location is the growth cone. The enzyme catalyses L-seryl-[protein] + ATP = O-phospho-L-seryl-[protein] + ADP + H(+). The catalysed reaction is L-threonyl-[protein] + ATP = O-phospho-L-threonyl-[protein] + ADP + H(+). May be involved in neuronal differentiation. The sequence is that of Serine/threonine-protein kinase LMTK1 (Aatk) from Mus musculus (Mouse).